Here is a 458-residue protein sequence, read N- to C-terminus: Sphingomyelinase DDB_G0288017 (458 aa).

The segment at 91 to 111 (NKKAKSPPPPSSLKQQNLHNN) is disordered. E135 lines the Mg(2+) pocket. H447 serves as the catalytic Proton acceptor.

This sequence belongs to the neutral sphingomyelinase family. Mg(2+) serves as cofactor.

It carries out the reaction a sphingomyelin + H2O = phosphocholine + an N-acylsphing-4-enine + H(+). Its pathway is lipid metabolism; sphingolipid metabolism. Catalyzes the hydrolysis of sphingomyelin to form ceramide and phosphocholine. The polypeptide is Sphingomyelinase DDB_G0288017 (Dictyostelium discoideum (Social amoeba)).